We begin with the raw amino-acid sequence, 78 residues long: Large ribosomal subunit protein bL28 (78 aa).

The segment at 1-21 (MSRVCQVTGKKPMVGNNRSHA) is disordered.

It belongs to the bacterial ribosomal protein bL28 family.

The protein is Large ribosomal subunit protein bL28 of Shewanella woodyi (strain ATCC 51908 / MS32).